Consider the following 1161-residue polypeptide: DNA-directed RNA polymerase subunit beta' (1161 aa).

The Zn(2+) site is built by Cys60, Cys62, Cys75, and Cys78. Residues Asp449, Asp451, and Asp453 each coordinate Mg(2+). Positions 790, 864, 871, and 874 each coordinate Zn(2+).

Belongs to the RNA polymerase beta' chain family. In terms of assembly, the RNAP catalytic core consists of 2 alpha, 1 beta, 1 beta' and 1 omega subunit. When a sigma factor is associated with the core the holoenzyme is formed, which can initiate transcription. Requires Mg(2+) as cofactor. Zn(2+) is required as a cofactor.

The catalysed reaction is RNA(n) + a ribonucleoside 5'-triphosphate = RNA(n+1) + diphosphate. Functionally, DNA-dependent RNA polymerase catalyzes the transcription of DNA into RNA using the four ribonucleoside triphosphates as substrates. The sequence is that of DNA-directed RNA polymerase subunit beta' from Clostridioides difficile (strain 630) (Peptoclostridium difficile).